Reading from the N-terminus, the 277-residue chain is Putative hydroxypyruvate isomerase (277 aa).

Catalysis depends on proton donor/acceptor residues E150 and E249.

It belongs to the hyi family.

The catalysed reaction is 3-hydroxypyruvate = 2-hydroxy-3-oxopropanoate. Catalyzes the reversible isomerization between hydroxypyruvate and 2-hydroxy-3-oxopropanoate (also termed tartronate semialdehyde). This is Putative hydroxypyruvate isomerase (HYI) from Homo sapiens (Human).